The chain runs to 30 residues: Cyclotide cter-Q (30 aa).

The cyclopeptide (Gly-Asn) cross-link spans 1–30 (GIPCGESCVFIPCISTVIGCSCKNKVCYRN). 3 disulfide bridges follow: Cys4–Cys20, Cys8–Cys22, and Cys13–Cys27.

In terms of processing, this is a cyclic peptide.

It is found in the secreted. Functionally, probably participates in a plant defense mechanism. This chain is Cyclotide cter-Q, found in Clitoria ternatea (Butterfly pea).